Here is a 382-residue protein sequence, read N- to C-terminus: Galactokinase (382 aa).

34–37 provides a ligand contact to substrate; the sequence is EHTD. Residue 124 to 130 coordinates ATP; sequence GAGLSSS. Mg(2+)-binding residues include serine 130 and glutamate 162. Catalysis depends on aspartate 174, which acts as the Proton acceptor. A substrate-binding site is contributed by tyrosine 223.

Belongs to the GHMP kinase family. GalK subfamily.

The protein localises to the cytoplasm. It catalyses the reaction alpha-D-galactose + ATP = alpha-D-galactose 1-phosphate + ADP + H(+). It functions in the pathway carbohydrate metabolism; galactose metabolism. Functionally, catalyzes the transfer of the gamma-phosphate of ATP to D-galactose to form alpha-D-galactose-1-phosphate (Gal-1-P). The protein is Galactokinase of Escherichia coli O81 (strain ED1a).